We begin with the raw amino-acid sequence, 528 residues long: Phosphoenolpyruvate carboxykinase (ATP) (528 aa).

Substrate is bound by residues R56, Y192, and K198. Residues K198, H217, and 233–241 contribute to the ATP site; that span reads GLSGTGKTT. Residues K198 and H217 each contribute to the Mn(2+) site. D254 is a binding site for Mn(2+). The ATP site is built by E282, R319, and T444. A substrate-binding site is contributed by R319.

The protein belongs to the phosphoenolpyruvate carboxykinase (ATP) family. The cofactor is Mn(2+).

It localises to the cytoplasm. The catalysed reaction is oxaloacetate + ATP = phosphoenolpyruvate + ADP + CO2. It functions in the pathway carbohydrate biosynthesis; gluconeogenesis. In terms of biological role, involved in the gluconeogenesis. Catalyzes the conversion of oxaloacetate (OAA) to phosphoenolpyruvate (PEP) through direct phosphoryl transfer between the nucleoside triphosphate and OAA. The protein is Phosphoenolpyruvate carboxykinase (ATP) of Bacillus cereus (strain B4264).